A 193-amino-acid chain; its full sequence is MTEKHKTMGKFKVIVLAGTAGTGKSTIAGELIHEFKDIYPDLKFIEGDDLHPPANVEKMTRGIPLNDDDRWDWLKKVAVESTKAAASTKEHLSIVACSSLKKKYRDLIRHTCPESEFHFIFLYASKIEVLKRLKTRKGHFMKADMMESQFRDLELPDINDETDCDIVPLDFKTFYQIEKDVIQVVKSKVLNIE.

18–25 (GTAGTGKS) is a binding site for ATP.

It belongs to the gluconokinase GntK/GntV family.

The protein resides in the cytoplasm. It catalyses the reaction D-gluconate + ATP = 6-phospho-D-gluconate + ADP + H(+). Its pathway is carbohydrate acid metabolism; D-gluconate degradation. The chain is Probable gluconokinase from Saccharomyces cerevisiae (strain ATCC 204508 / S288c) (Baker's yeast).